Reading from the N-terminus, the 535-residue chain is E3 ubiquitin-protein ligase rnf168 (535 aa).

The RING-type zinc finger occupies 16-55; sequence CPICQEILLEPVTLPCKHTLCNPCFQMTVEKASLCCPFCR. Residues 112-130 carry the LR motif 1 motif; that stretch reads LCKPGEIRQEYEAEVSKIE. Residues 145–153 carry the UMI motif motif; sequence EDYIQKLLA. 2 consecutive short sequence motifs (MIU motif) follow at residues 170 to 193 and 406 to 429; these read IEEQ…LSNA and RRKQ…KELK. Basic and acidic residues predominate over residues 429–443; it reads KQVNRGKGSPDEYQL. The segment at 429-535 is disordered; the sequence is KQVNRGKGSP…LDLFQRSAGK (107 aa). The LR motif 2 signature appears at 433–444; the sequence is RGKGSPDEYQLR. Polar residues-rich tracts occupy residues 462-478 and 492-507; these read NEQT…QSGY and ITSS…TNTE.

The protein belongs to the RNF168 family. Monomer.

The protein localises to the nucleus. The enzyme catalyses S-ubiquitinyl-[E2 ubiquitin-conjugating enzyme]-L-cysteine + [acceptor protein]-L-lysine = [E2 ubiquitin-conjugating enzyme]-L-cysteine + N(6)-ubiquitinyl-[acceptor protein]-L-lysine.. The protein operates within protein modification; protein ubiquitination. E3 ubiquitin-protein ligase required for accumulation of repair proteins to sites of DNA damage. Acts with ube2n/ubc13 to amplify the rnf8-dependent histone ubiquitination. Recruited to sites of DNA damage at double-strand breaks (DSBs) by binding to ubiquitinated histone H2A and ubiquitinates histone H2A and H2AX, leading to amplify the rnf8-dependent H2A ubiquitination and promoting the formation of 'Lys-63'-linked ubiquitin conjugates. This leads to concentrate ubiquitinated histones H2A and H2AX at DNA lesions to the threshold required for recruitment of tp53bp1 and brca1. Catalyzes monoubiquitination of 'Lys-13' and 'Lys-15' of nucleosomal histone H2A (H2AK13Ub and H2AK15Ub, respectively). The polypeptide is E3 ubiquitin-protein ligase rnf168 (Xenopus tropicalis (Western clawed frog)).